Reading from the N-terminus, the 657-residue chain is N-acetylgalactosaminyltransferase 7 (657 aa).

Residues Met-1 to Gly-6 lie on the Cytoplasmic side of the membrane. Residues Phe-7–Ser-29 traverse the membrane as a helical; Signal-anchor for type II membrane protein segment. Disordered stretches follow at residues Ser-30–Phe-66 and Glu-83–Arg-105. The Lumenal portion of the chain corresponds to Ser-30–Val-657. Cystine bridges form between Cys-197-Cys-435, Cys-426-Cys-507, Cys-545-Cys-562, Cys-585-Cys-600, and Cys-625-Cys-640. The interval Leu-206 to Pro-317 is catalytic subdomain A. 2 residues coordinate substrate: Asp-247 and Arg-277. Mn(2+)-binding residues include Asp-301 and His-303. A catalytic subdomain B region spans residues Pro-381–Arg-443. Position 412 (Trp-412) interacts with substrate. His-440 provides a ligand contact to Mn(2+). Arg-443 serves as a coordination point for substrate. A Ricin B-type lectin domain is found at Val-532–Asn-652.

It belongs to the glycosyltransferase 2 family. GalNAc-T subfamily. Mn(2+) serves as cofactor. Highly expressed in sublingual gland. Expressed at lower level in stomach, small intestiine and colon.

It localises to the golgi apparatus membrane. The enzyme catalyses L-seryl-[protein] + UDP-N-acetyl-alpha-D-galactosamine = a 3-O-[N-acetyl-alpha-D-galactosaminyl]-L-seryl-[protein] + UDP + H(+). The catalysed reaction is L-threonyl-[protein] + UDP-N-acetyl-alpha-D-galactosamine = a 3-O-[N-acetyl-alpha-D-galactosaminyl]-L-threonyl-[protein] + UDP + H(+). Its pathway is protein modification; protein glycosylation. Functionally, glycopeptide transferase involved in O-linked oligosaccharide biosynthesis, which catalyzes the transfer of an N-acetyl-D-galactosamine residue to an already glycosylated peptide. In contrast to other proteins of the family, it does not act as a peptide transferase that transfers GalNAc onto serine or threonine residue on the protein receptor, but instead requires the prior addition of a GalNAc on a peptide before adding additional GalNAc moieties. Some peptide transferase activity is however not excluded, considering that its appropriate peptide substrate may remain unidentified. The protein is N-acetylgalactosaminyltransferase 7 (Galnt7) of Mus musculus (Mouse).